Reading from the N-terminus, the 314-residue chain is Replication-associated protein A (314 aa).

A CRESS-DNA virus Rep endonuclease domain is found at 17–120 (KHRNVNTFLT…PVTYWERGTF (104 aa)). The RCR-1 signature appears at 24-27 (FLTY). Glu58, His66, and His68 together coordinate a divalent metal cation. Positions 66-68 (HIH) match the RCR-2 motif. Tyr106 serves as the catalytic For DNA cleavage activity. An RCR-3 motif is present at residues 106 to 109 (YAMK). Asn110 contacts a divalent metal cation. The interval 180–192 (SANKLFPDIQEIY) is oligomerization. Over residues 255–269 (TGSSACTSSGQQEQA) the composition is skewed to polar residues. A disordered region spans residues 255–314 (TGSSACTSSGQQEQASPPGPGAWEDIITGRTTSTGPPTTRTQNTTSSTTYPSSTVHAGSN). Over residues 282-308 (TGRTTSTGPPTTRTQNTTSSTTYPSST) the composition is skewed to low complexity.

This sequence belongs to the geminiviridae Rep protein family. In terms of assembly, homooligomer. Part of the C- and V-complexes which are RepA-Rep-DNA complexes involved in the c-sense and v-sense transcription. Mg(2+) is required as a cofactor. The cofactor is Mn(2+).

It is found in the host nucleus. The protein resides in the host cytoplasm. Functionally, implicated in enhancement of V-sense gene expression. Acts a an inhibitor of C-sense gene transcription. The sequence is that of Replication-associated protein A from Cenchrus echinatus (Sugarcane).